The sequence spans 246 residues: Pyridoxine 5'-phosphate synthase (246 aa).

3-amino-2-oxopropyl phosphate is bound by residues Asn8 and Arg19. His44 (proton acceptor) is an active-site residue. Positions 46 and 51 each coordinate 1-deoxy-D-xylulose 5-phosphate. Catalysis depends on Glu76, which acts as the Proton acceptor. Thr106 provides a ligand contact to 1-deoxy-D-xylulose 5-phosphate. The active-site Proton donor is the His198. 3-amino-2-oxopropyl phosphate is bound by residues Asp199 and 221 to 222 (GH).

This sequence belongs to the PNP synthase family. Homooctamer; tetramer of dimers.

Its subcellular location is the cytoplasm. It catalyses the reaction 3-amino-2-oxopropyl phosphate + 1-deoxy-D-xylulose 5-phosphate = pyridoxine 5'-phosphate + phosphate + 2 H2O + H(+). The protein operates within cofactor biosynthesis; pyridoxine 5'-phosphate biosynthesis; pyridoxine 5'-phosphate from D-erythrose 4-phosphate: step 5/5. Functionally, catalyzes the complicated ring closure reaction between the two acyclic compounds 1-deoxy-D-xylulose-5-phosphate (DXP) and 3-amino-2-oxopropyl phosphate (1-amino-acetone-3-phosphate or AAP) to form pyridoxine 5'-phosphate (PNP) and inorganic phosphate. In Brucella suis (strain ATCC 23445 / NCTC 10510), this protein is Pyridoxine 5'-phosphate synthase.